Here is a 78-residue protein sequence, read N- to C-terminus: ATP synthase subunit c (78 aa).

Transmembrane regions (helical) follow at residues 11–31 and 53–73; these read FIGA…VGHV and LFVG…IALL.

The protein belongs to the ATPase C chain family. In terms of assembly, F-type ATPases have 2 components, F(1) - the catalytic core - and F(0) - the membrane proton channel. F(1) has five subunits: alpha(3), beta(3), gamma(1), delta(1), epsilon(1). F(0) has four main subunits: a(1), b(1), b'(1) and c(10-14). The alpha and beta chains form an alternating ring which encloses part of the gamma chain. F(1) is attached to F(0) by a central stalk formed by the gamma and epsilon chains, while a peripheral stalk is formed by the delta, b and b' chains.

The protein localises to the cell inner membrane. Functionally, f(1)F(0) ATP synthase produces ATP from ADP in the presence of a proton or sodium gradient. F-type ATPases consist of two structural domains, F(1) containing the extramembraneous catalytic core and F(0) containing the membrane proton channel, linked together by a central stalk and a peripheral stalk. During catalysis, ATP synthesis in the catalytic domain of F(1) is coupled via a rotary mechanism of the central stalk subunits to proton translocation. Its function is as follows. Key component of the F(0) channel; it plays a direct role in translocation across the membrane. A homomeric c-ring of between 10-14 subunits forms the central stalk rotor element with the F(1) delta and epsilon subunits. In Cereibacter sphaeroides (strain ATCC 17025 / ATH 2.4.3) (Rhodobacter sphaeroides), this protein is ATP synthase subunit c.